The sequence spans 510 residues: NAD(P)H-quinone oxidoreductase subunit 2 B, chloroplastic (510 aa).

Helical transmembrane passes span 24–44 (LLLF…GLIL), 57–77 (IPWL…ALLF), 99–119 (IFQF…VEYI), 124–144 (MAIA…MFLC), 149–169 (LITI…LSGY), 183–203 (YLLM…WLYG), 227–247 (PGIS…LSPA), 295–315 (WHLL…LIAI), 323–343 (MLAY…IVGN), 354–374 (YMLF…LFGL), 395–415 (ALSL…AGFF), 418–438 (LHLF…IGLL), and 484–504 (MIVC…IIAI).

This sequence belongs to the complex I subunit 2 family. As to quaternary structure, NDH is composed of at least 16 different subunits, 5 of which are encoded in the nucleus.

The protein resides in the plastid. It localises to the chloroplast thylakoid membrane. The enzyme catalyses a plastoquinone + NADH + (n+1) H(+)(in) = a plastoquinol + NAD(+) + n H(+)(out). It catalyses the reaction a plastoquinone + NADPH + (n+1) H(+)(in) = a plastoquinol + NADP(+) + n H(+)(out). In terms of biological role, NDH shuttles electrons from NAD(P)H:plastoquinone, via FMN and iron-sulfur (Fe-S) centers, to quinones in the photosynthetic chain and possibly in a chloroplast respiratory chain. The immediate electron acceptor for the enzyme in this species is believed to be plastoquinone. Couples the redox reaction to proton translocation, and thus conserves the redox energy in a proton gradient. The polypeptide is NAD(P)H-quinone oxidoreductase subunit 2 B, chloroplastic (Gossypium barbadense (Sea Island cotton)).